The following is a 393-amino-acid chain: Major outer membrane porin, serovar E (393 aa).

Positions 1–22 (MKKLLKSVLVFAALSSASSLQA) are cleaved as a signal peptide.

Belongs to the chlamydial porin (CP) (TC 1.B.2) family. In terms of assembly, part of a disulfide cross-linked outer membrane complex (COMC) composed of the major outer membrane porin (MOMP), the small cysteine-rich protein (OmcA) and the large cysteine-rich periplasmic protein (OmcB).

The protein resides in the cell outer membrane. In terms of biological role, in elementary bodies (EBs, the infectious stage, which is able to survive outside the host cell) provides the structural integrity of the outer envelope through disulfide cross-links with the small cysteine-rich protein and the large cysteine-rich periplasmic protein. It has been described in publications as the Sarkosyl-insoluble COMC (Chlamydia outer membrane complex), and serves as the functional equivalent of peptidoglycan. Its function is as follows. Permits diffusion of specific solutes through the outer membrane. The protein is Major outer membrane porin, serovar E (ompA) of Chlamydia trachomatis.